Consider the following 41-residue polypeptide: U-AITX-Bg1a (41 aa).

Intrachain disulfides connect Cys2–Cys35, Cys4–Cys28, and Cys18–Cys36.

This sequence belongs to the sea anemone type 3 (BDS) potassium channel toxin family.

The protein localises to the secreted. The protein resides in the nematocyst. In terms of biological role, potently and selectively inhibits voltage-gated potassium channels Kv11/KCNH/ERG. Acts as a gating-modifier toxin that shifts the voltage-dependence of ERG activation in the positive direction and suppresses its current amplitudes elicited by strong depolarizing pulses that maximally activate the channels. The sequence is that of U-AITX-Bg1a from Bunodosoma granuliferum (Red warty sea anemone).